Here is a 415-residue protein sequence, read N- to C-terminus: MTTETIQSNANLAPLPPHVPEHLVFDFDMYNPSNLSAGVQEAWAVLQESNVPDLVWTRCNGGHWIATRGQLIREAYEDYRHFSSECPFIPREAGEAYDFIPTSMDPPEQRQFRALANQVVGMPVVDKLENRIQELACSLIESLRPQGQCNFTEDYAEPFPIRIFMLLAGLPEEDIPHLKYLTDQMTRPDGSMTFAEAKEALYDYLIPIIEQRRQKPGTDAISIVANGQVNGRPITSDEAKRMCGLLLVGGLDTVVNFLSFSMEFLAKSPEHRQELIERPERIPAACEELLRRFSLVADGRILTSDYEFHGVQLKKGDQILLPQMLSGLDERENACPMHVDFSRQKVSHTTFGHGSHLCLGQHLARREIIVTLKEWLTRIPDFSIAPGAQIQHKSGIVSGVQALPLVWDPATTKAV.

Cysteine 358 is a heme binding site.

It belongs to the cytochrome P450 family. Requires heme as cofactor.

It localises to the cytoplasm. It carries out the reaction 2 reduced [2Fe-2S]-[putidaredoxin] + (1R,4R)-camphor + O2 + 2 H(+) = (1R,4R,5R)-5-hydroxycamphor + 2 oxidized [2Fe-2S]-[putidaredoxin] + H2O. It functions in the pathway terpene metabolism; (R)-camphor degradation. Functionally, involved in a camphor oxidation system. The sequence is that of Camphor 5-monooxygenase (camC) from Pseudomonas putida (Arthrobacter siderocapsulatus).